The primary structure comprises 372 residues: Maltose/maltodextrin import ATP-binding protein MalK (372 aa).

The ABC transporter domain occupies 4–234 (VSLRNVGKSY…PANRFVAGFI (231 aa)). An ATP-binding site is contributed by 36–43 (GPSGCGKS).

This sequence belongs to the ABC transporter superfamily. Maltooligosaccharide importer (TC 3.A.1.1.1) family. The complex is composed of two ATP-binding proteins (MalK), two transmembrane proteins (MalG and MalK) and a solute-binding protein (MalE).

It is found in the cell inner membrane. The enzyme catalyses D-maltose(out) + ATP + H2O = D-maltose(in) + ADP + phosphate + H(+). Functionally, part of the ABC transporter complex MalEFGK involved in maltose/maltodextrin import. Responsible for energy coupling to the transport system. This is Maltose/maltodextrin import ATP-binding protein MalK from Mannheimia succiniciproducens (strain KCTC 0769BP / MBEL55E).